Consider the following 419-residue polypeptide: MPKETVILAYSGGLDTSCVLKWLLDKQYEVICVLADVGQKEDFTAAEKKALKIGAKKVIVADVKQSFVEDYIWPAVQMGLVYEERYLLGTSLARPCISVALMEVAREYGAKYLAHGATGKGNDQVRFELCAYALKPDLKIIAPWRDVEFCCQFQGRQDLIAYAQQHGIEVSAKPATPWSTDANILHISYESGILEDPNTVAPENLYEMTVDPLTRAPRDPVHLVIQFDRGLPSSVEDLPGGRVYTKPLEMLDFLNKLGGSYGIGRIDIVENRFVGLKSRGVYETPGGTILFAAHQDLEVFALDREVLRTKQVLRDRMADYVYNGFWFSPEAIYARKCIELAEQRVSGKVTVELAPGYCRAIARKAAKDVGALYNEQLVSMDVHGGYVPQDAGGFIAINAVRIREHVRAFGAYDVPTKKN.

ATP contacts are provided by residues 9–17 (AYSGGLDTS) and Ala-35. Tyr-86 and Ser-91 together coordinate L-citrulline. 114–122 (AHGATGKGN) contacts ATP. Thr-118, Asn-122, and Asp-123 together coordinate L-aspartate. Asn-122 lines the L-citrulline pocket. Residues Arg-126, Ser-179, Ser-188, Glu-270, and Tyr-282 each contribute to the L-citrulline site.

The protein belongs to the argininosuccinate synthase family. Type 1 subfamily. As to quaternary structure, homotetramer.

The enzyme catalyses L-citrulline + L-aspartate + ATP = 2-(N(omega)-L-arginino)succinate + AMP + diphosphate + H(+). It participates in amino-acid biosynthesis; L-arginine biosynthesis; L-arginine from L-ornithine and carbamoyl phosphate: step 2/3. Its pathway is nitrogen metabolism; urea cycle; (N(omega)-L-arginino)succinate from L-aspartate and L-citrulline: step 1/1. The sequence is that of Argininosuccinate synthase from Drosophila melanogaster (Fruit fly).